Reading from the N-terminus, the 65-residue chain is UPF0337 protein gbs1203 (65 aa).

Over residues 1–12 (MSEEKFDAKVDK) the composition is skewed to basic and acidic residues. The interval 1–29 (MSEEKFDAKVDKVSGSVKESVGKLTGDKE) is disordered.

Belongs to the UPF0337 (CsbD) family.

The sequence is that of UPF0337 protein gbs1203 from Streptococcus agalactiae serotype III (strain NEM316).